We begin with the raw amino-acid sequence, 182 residues long: uncharacterized protein (182 aa).

BNR repeat units lie at residues 58–69 and 102–113; these read WISFDAGENWET and YITDDRGESWRA.

This is an uncharacterized protein from Saccharomyces cerevisiae (strain ATCC 204508 / S288c) (Baker's yeast).